The following is a 209-amino-acid chain: N-(5'-phosphoribosyl)anthranilate isomerase (209 aa).

The protein belongs to the TrpF family.

The catalysed reaction is N-(5-phospho-beta-D-ribosyl)anthranilate = 1-(2-carboxyphenylamino)-1-deoxy-D-ribulose 5-phosphate. The protein operates within amino-acid biosynthesis; L-tryptophan biosynthesis; L-tryptophan from chorismate: step 3/5. The protein is N-(5'-phosphoribosyl)anthranilate isomerase of Pyrobaculum islandicum (strain DSM 4184 / JCM 9189 / GEO3).